Consider the following 555-residue polypeptide: DNA repair and recombination protein rhm52 (555 aa).

Residues 148–152 mediate DNA binding; sequence KRALR. Disordered stretches follow at residues 197 to 232 and 251 to 555; these read VVAE…DSFD and HPDE…MKLN. The span at 260 to 276 shows a compositional bias: low complexity; that stretch reads NSHASGSSGNTGASTTN. 2 stretches are compositionally biased toward polar residues: residues 283–300 and 312–334; these read SGNQ…SRMN and TPNH…QNNH. 2 stretches are compositionally biased toward low complexity: residues 354–375 and 382–404; these read NNNN…GPQQ and NGAA…AVAR. Residues 468–478 are compositionally biased toward polar residues; it reads DNPSNNAGNGV. A compositionally biased stretch (low complexity) spans 479–490; that stretch reads QNQPQKPQPSQQ. The segment covering 491–500 has biased composition (polar residues); it reads RGSILNPQFD. A compositionally biased stretch (low complexity) spans 536–547; that stretch reads PNGTSNGNGTPG.

The protein belongs to the RAD52 family. As to quaternary structure, part of a complex that includes RAD51, RAD52 and RAD59.

It is found in the nucleus. Involved in DNA double-strand break (DSB) repair and recombination. Promotes the annealing of complementary single-stranded DNA and by stimulation of the RAD51 recombinase. The protein is DNA repair and recombination protein rhm52 (RHM52) of Pyricularia oryzae (strain 70-15 / ATCC MYA-4617 / FGSC 8958) (Rice blast fungus).